The chain runs to 439 residues: Telomeric repeat-binding factor 1 (439 aa).

Residues 1–36 are disordered; that stretch reads MAEDVSSAAPSPRGCADGRDADPTEEQMAETERNDE. Residue Ala2 is modified to N-acetylalanine. A Phosphoserine modification is found at Ser11. A compositionally biased stretch (acidic residues) spans 23 to 36; it reads PTEEQMAETERNDE. Residues 58–268 are TRFH mediates dimerization; the sequence is EEEEEDAGLV…AAAKVVESKR (211 aa). Residue Lys213 forms a Glycyl lysine isopeptide (Lys-Gly) (interchain with G-Cter in SUMO2) linkage. Position 219 is a phosphoserine; by ATM (Ser219). An interaction with RLIM region spans residues 265–378; sequence ESKRTRTITS…PVTPEKHRAR (114 aa). Residues 266–311 form a disordered region; the sequence is SKRTRTITSQDKPSGNDVEMETEANLDTRKSVSDKQSAVTESSEGT. Positions 299–311 are enriched in polar residues; sequence DKQSAVTESSEGT. Residue Lys325 forms a Glycyl lysine isopeptide (Lys-Gly) (interchain with G-Cter in SUMO2) linkage. Residues 326–375 form a disordered region; the sequence is LQHGTQQQDLNKKERRVGTPQSTKKKKESRRATESRIPVSKSQPVTPEKH. Residues 337-356 carry the Nuclear localization signal motif; sequence KKERRVGTPQSTKKKKESRR. A Glycyl lysine isopeptide (Lys-Gly) (interchain with G-Cter in SUMO2) cross-link involves residue Lys366. One can recognise an HTH myb-type domain in the interval 375–432; that stretch reads HRARKRQAWLWEEDKNLRSGVRKYGEGNWSKILLHYKFNNRTSVMLKDRWRTMKKLKL. Residues 403–428 constitute a DNA-binding region (H-T-H motif); it reads WSKILLHYKFNNRTSVMLKDRWRTMK.

Homodimer; can contain both isoforms. Found in a complex with POT1; TINF2 and TNKS1. Interacts with ATM, TINF2, TNKS1, TNKS2, PINX1, NEK2 and MAPRE1. Component of the shelterin complex (telosome) composed of TERF1, TERF2, TINF2, TERF2IP ACD and POT1. Interacts with RLIM (via N-terminus). Interacts with FBXO4. Interaction with TINF2 protects against interaction with FBXO4 and subsequent polyubiquitination and proteasomal degradation. Interacts with GNL3L; this interaction promotes homodimerization. Interacts with TIN2. Interacts with RTEL1. Interactions with GNL3L and TIN2 are mutually exclusive. Interacts with CCDC79/TERB1. Interacts with TRIOBP isoform 1; mediates TERF1 localization to the centrosome. Post-translationally, phosphorylated preferentially on Ser-219 in an ATM-dependent manner in response to ionizing DNA damage. In terms of processing, ADP-ribosylation by TNKS1 or TNKS2 diminishes its ability to bind to telomeric DNA. Ubiquitinated by RLIM/RNF12, leading to its degradation by the proteasome. Ubiquitinated by a SCF (SKP1-CUL1-F-box protein) ubiquitin-protein ligase complex, leading to its degradation by the proteasome. As to expression, highly expressed and ubiquitous. Isoform Pin2 predominates.

The protein resides in the nucleus. It localises to the cytoplasm. Its subcellular location is the cytoskeleton. It is found in the spindle. The protein localises to the chromosome. The protein resides in the telomere. Binds the telomeric double-stranded 5'-TTAGGG-3' repeat and negatively regulates telomere length. Involved in the regulation of the mitotic spindle. Component of the shelterin complex (telosome) that is involved in the regulation of telomere length and protection. Shelterin associates with arrays of double-stranded 5'-TTAGGG-3' repeats added by telomerase and protects chromosome ends; without its protective activity, telomeres are no longer hidden from the DNA damage surveillance and chromosome ends are inappropriately processed by DNA repair pathways. This chain is Telomeric repeat-binding factor 1 (TERF1), found in Homo sapiens (Human).